The chain runs to 228 residues: 5'-methylthioadenosine/S-adenosylhomocysteine nucleosidase (228 aa).

Glu11 serves as the catalytic Proton acceptor. Substrate is bound by residues Gly77, Ile151, and 172 to 173 (ME). Residue Asp196 is the Proton donor of the active site.

The protein belongs to the PNP/UDP phosphorylase family. MtnN subfamily.

The catalysed reaction is S-adenosyl-L-homocysteine + H2O = S-(5-deoxy-D-ribos-5-yl)-L-homocysteine + adenine. It catalyses the reaction S-methyl-5'-thioadenosine + H2O = 5-(methylsulfanyl)-D-ribose + adenine. The enzyme catalyses 5'-deoxyadenosine + H2O = 5-deoxy-D-ribose + adenine. The protein operates within amino-acid biosynthesis; L-methionine biosynthesis via salvage pathway; S-methyl-5-thio-alpha-D-ribose 1-phosphate from S-methyl-5'-thioadenosine (hydrolase route): step 1/2. Functionally, catalyzes the irreversible cleavage of the glycosidic bond in both 5'-methylthioadenosine (MTA) and S-adenosylhomocysteine (SAH/AdoHcy) to adenine and the corresponding thioribose, 5'-methylthioribose and S-ribosylhomocysteine, respectively. Also cleaves 5'-deoxyadenosine, a toxic by-product of radical S-adenosylmethionine (SAM) enzymes, into 5-deoxyribose and adenine. The chain is 5'-methylthioadenosine/S-adenosylhomocysteine nucleosidase from Staphylococcus carnosus (strain TM300).